The primary structure comprises 1414 residues: DNA-directed RNA polymerase subunit beta' (1414 aa).

Residues cysteine 72, cysteine 74, cysteine 87, and cysteine 90 each contribute to the Zn(2+) site. 3 residues coordinate Mg(2+): aspartate 463, aspartate 465, and aspartate 467. Zn(2+) is bound by residues cysteine 811, cysteine 885, cysteine 892, and cysteine 895.

This sequence belongs to the RNA polymerase beta' chain family. As to quaternary structure, the RNAP catalytic core consists of 2 alpha, 1 beta, 1 beta' and 1 omega subunit. When a sigma factor is associated with the core the holoenzyme is formed, which can initiate transcription. The cofactor is Mg(2+). Zn(2+) is required as a cofactor.

The catalysed reaction is RNA(n) + a ribonucleoside 5'-triphosphate = RNA(n+1) + diphosphate. In terms of biological role, DNA-dependent RNA polymerase catalyzes the transcription of DNA into RNA using the four ribonucleoside triphosphates as substrates. The polypeptide is DNA-directed RNA polymerase subunit beta' (Roseobacter denitrificans (strain ATCC 33942 / OCh 114) (Erythrobacter sp. (strain OCh 114))).